The following is a 435-amino-acid chain: Glutamyl-tRNA reductase (435 aa).

Substrate contacts are provided by residues 50–53 (TCNR), Ser-110, 115–117 (ESQ), and Gln-121. Cys-51 serves as the catalytic Nucleophile. 191–196 (GAGDMG) contacts NADP(+).

This sequence belongs to the glutamyl-tRNA reductase family. Homodimer.

It catalyses the reaction (S)-4-amino-5-oxopentanoate + tRNA(Glu) + NADP(+) = L-glutamyl-tRNA(Glu) + NADPH + H(+). It participates in porphyrin-containing compound metabolism; protoporphyrin-IX biosynthesis; 5-aminolevulinate from L-glutamyl-tRNA(Glu): step 1/2. In terms of biological role, catalyzes the NADPH-dependent reduction of glutamyl-tRNA(Glu) to glutamate 1-semialdehyde (GSA). In Sulfurovum sp. (strain NBC37-1), this protein is Glutamyl-tRNA reductase.